Here is a 208-residue protein sequence, read N- to C-terminus: FMN-dependent NADH:quinone oxidoreductase 1 (208 aa).

Residue Ser17–Ser19 coordinates FMN.

The protein belongs to the azoreductase type 1 family. As to quaternary structure, homodimer. Requires FMN as cofactor.

The enzyme catalyses 2 a quinone + NADH + H(+) = 2 a 1,4-benzosemiquinone + NAD(+). The catalysed reaction is N,N-dimethyl-1,4-phenylenediamine + anthranilate + 2 NAD(+) = 2-(4-dimethylaminophenyl)diazenylbenzoate + 2 NADH + 2 H(+). Quinone reductase that provides resistance to thiol-specific stress caused by electrophilic quinones. Its function is as follows. Also exhibits azoreductase activity. Catalyzes the reductive cleavage of the azo bond in aromatic azo compounds to the corresponding amines. The polypeptide is FMN-dependent NADH:quinone oxidoreductase 1 (Listeria monocytogenes serovar 1/2a (strain ATCC BAA-679 / EGD-e)).